We begin with the raw amino-acid sequence, 1089 residues long: MQTTDLGNKEYGKIWHRKPSPSTNEGIIVNIVHVDASHLSKSTRFLQAAFDSAGDCFLAGDHLGNVYMFNLNRNRFDLVQKTMQACTAIAFNLHRKTEFLVALADNSVKCFDAGAKELVSWMRGHESAVTSISIHASGRYAVTTSSDTAQLWDLDTFQRKRKLNVRQSVGIQKVFFLPLSNTILSCFKDDSIFAWESDTLACKYQLPIPEDETKLHYKAFAITRDGRMLAAGGKSKNLHLWCLDSKQLFRIIQMPAKVRSVQQLEFLPDNFDGGSSQILGVLSQDGIMRFINIQTCKLVFDIGNPDNRVVTSSVSPNGRYITSVMENGSLNIYSVQALSKELNKPPPPLVKMVDLSKDKDSTGNKSGVSRASQEKVRVSSGRTCRPWKTKDPIVRTKYLRPEDTTASEDKENALPAGLNKPRLQAMLKGFGEYPAKYRMFIWRSLLQLPENHAAFSSLLDKGTHSQYKLLHQEYPIKSRKLLRVLQRTLSALAHWSAIFGETKYLPLLAFPFVKLFQNNQLICFEVVATVITNWCQHWFEYFPNPPINILGMVENLLAHHDKELLQHFINHGVNSQVYAWPILETLFSEVLTREEWLRLFDNVFSNHPSFLLMAVVSYIISSRSPLLHCNQKDDFEYFFHHRNNLDISNMIREAYHLMDTSPAEIHPQRLLSDFEPLTRGQYPIFNKYPKFIVDYQGQERERIRQEEMEYLRERQLTQEVEAEAVKRRLEDQAWYQQQELLKGAEEQRRKLLMDEEQKLLHQRQRLATVKRELRLKELQLLDAARRRFLRYQQDQRKMELRRLDDEIERKVSLREQETATIVKDVEIRQMELEAQRRFFEQQLAKEQEAVTQDMKGELDANRRRADLEEQMFWRLMETEEDLKDQKLLEESLAKAERLCVETDWKIQSLQKQKCDDWERGKRYEEISKLTEDVQEKERELCNVLKDMETRKWAEVSQKMTELEREKLAGSAQQAQRQQFLQEKLRQEAGPIDISGEDGNEYFERLRDLNRSSMQKDFSSSDEQHVPENVCLNDVSASDSSTHFSLDRGRGELERGERALISEVRELRQKLASQAHKKYPHLHFSQTSWS.

WD repeat units lie at residues 33–74, 75–116, 117–157, 158–200, 201–248, 249–296, and 297–334; these read HVDA…LNRN, RFDL…AGAK, ELVS…LDTF, QRKR…SDTL, ACKY…SKQL, FRII…IQTC, and KLVF…NIYS. A disordered region spans residues 355–383; sequence LSKDKDSTGNKSGVSRASQEKVRVSSGRT. Residues 432–607 enclose the Rab-GAP TBC domain; it reads EYPAKYRMFI…RLFDNVFSNH (176 aa). 3 coiled-coil regions span residues 698–852, 892–951, and 1050–1077; these read QERE…AVTQ, LAKA…ETRK, and GELE…AHKK.

It localises to the cytoplasm. The protein resides in the cytoskeleton. The protein localises to the microtubule organizing center. Its subcellular location is the centrosome. It is found in the centriolar satellite. It localises to the cilium basal body. Its function is as follows. Molecular adapter which is involved in cilium biogenesis. Part of a functional complex including OFD1 a centriolar protein involved in cilium assembly. Could regulate the cAMP-dependent phosphorylation of OFD1, and its subsequent ubiquitination by PJA2 which ultimately leads to its proteasomal degradation. In Xenopus laevis (African clawed frog), this protein is TBC1 domain family member 31.